A 73-amino-acid polypeptide reads, in one-letter code: UPF0352 protein APL_0584 (73 aa).

This sequence belongs to the UPF0352 family.

In Actinobacillus pleuropneumoniae serotype 5b (strain L20), this protein is UPF0352 protein APL_0584.